The following is a 294-amino-acid chain: Golgi to ER traffic protein 2 (294 aa).

Residues 1–104 form a disordered region; that stretch reads MSSELSETEK…QATSPQETID (104 aa). Residues 1-166 are Cytoplasmic-facing; that stretch reads MSSELSETEK…LDYNNYLINN (166 aa). A compositionally biased stretch (basic residues) spans 12-21; sequence KLIRERRQKK. Residues 34 to 65 show a composition bias toward polar residues; sequence ITGQAENSQLDTESPLDSKSSRETTPTVTKVD. The segment covering 85–95 has biased composition (basic and acidic residues); sequence KVEKSQKKKEQ. A helical membrane pass occupies residues 167–187; sequence LKVWSIIFKWCFFLIPYLFAL. Topologically, residues 188-205 are lumenal; that stretch reads TRSEPISFLPEQFSNPSN. A helical membrane pass occupies residues 206-225; it reads FFMIFLSFEIVATSIYFQKL. Residues 226–272 lie on the Cytoplasmic side of the membrane; the sequence is QNIEKSNKINGFQSNNKIVNLVSLIPEGVLPVPDIKGKVIMALQYWD. The chain crosses the membrane as a helical span at residues 273-293; that stretch reads VFSMFLTDICFVLVMMGLFKL. Position 294 (Ile294) is a topological domain, lumenal.

This sequence belongs to the GET2 family. In terms of assembly, component of the Golgi to ER traffic (GET) complex, which is composed of GET1, GET2 and GET3. Within the complex, GET1 and GET2 form a heterotetramer which is stabilized by phosphatidylinositol binding and which binds to the GET3 homodimer.

It localises to the endoplasmic reticulum membrane. The protein localises to the golgi apparatus membrane. Required for the post-translational delivery of tail-anchored (TA) proteins to the endoplasmic reticulum. Together with GET1, acts as a membrane receptor for soluble GET3, which recognizes and selectively binds the transmembrane domain of TA proteins in the cytosol. The GET complex cooperates with the HDEL receptor ERD2 to mediate the ATP-dependent retrieval of resident ER proteins that contain a C-terminal H-D-E-L retention signal from the Golgi to the ER. This Vanderwaltozyma polyspora (strain ATCC 22028 / DSM 70294 / BCRC 21397 / CBS 2163 / NBRC 10782 / NRRL Y-8283 / UCD 57-17) (Kluyveromyces polysporus) protein is Golgi to ER traffic protein 2.